The chain runs to 312 residues: Methionyl-tRNA formyltransferase (312 aa).

112 to 115 (SLLP) serves as a coordination point for (6S)-5,6,7,8-tetrahydrofolate.

Belongs to the Fmt family.

The catalysed reaction is L-methionyl-tRNA(fMet) + (6R)-10-formyltetrahydrofolate = N-formyl-L-methionyl-tRNA(fMet) + (6S)-5,6,7,8-tetrahydrofolate + H(+). Its function is as follows. Attaches a formyl group to the free amino group of methionyl-tRNA(fMet). The formyl group appears to play a dual role in the initiator identity of N-formylmethionyl-tRNA by promoting its recognition by IF2 and preventing the misappropriation of this tRNA by the elongation apparatus. The protein is Methionyl-tRNA formyltransferase of Dehalococcoides mccartyi (strain CBDB1).